A 350-amino-acid polypeptide reads, in one-letter code: tRNA uridine(34) hydroxylase (350 aa).

A Rhodanese domain is found at 146 to 240; that stretch reads DDPEAVFVDM…YARRAREQGL (95 aa). The Cysteine persulfide intermediate role is filled by Cys-200.

It belongs to the TrhO family.

The enzyme catalyses uridine(34) in tRNA + AH2 + O2 = 5-hydroxyuridine(34) in tRNA + A + H2O. Functionally, catalyzes oxygen-dependent 5-hydroxyuridine (ho5U) modification at position 34 in tRNAs. The chain is tRNA uridine(34) hydroxylase from Erwinia tasmaniensis (strain DSM 17950 / CFBP 7177 / CIP 109463 / NCPPB 4357 / Et1/99).